We begin with the raw amino-acid sequence, 122 residues long: Small ribosomal subunit protein uS13 (122 aa).

The segment at 94-122 (KGLPVRGQRTHTNARTRKGPRRAIAGKKK) is disordered.

Belongs to the universal ribosomal protein uS13 family. In terms of assembly, part of the 30S ribosomal subunit. Forms a loose heterodimer with protein S19. Forms two bridges to the 50S subunit in the 70S ribosome.

Functionally, located at the top of the head of the 30S subunit, it contacts several helices of the 16S rRNA. In the 70S ribosome it contacts the 23S rRNA (bridge B1a) and protein L5 of the 50S subunit (bridge B1b), connecting the 2 subunits; these bridges are implicated in subunit movement. Contacts the tRNAs in the A and P-sites. This is Small ribosomal subunit protein uS13 from Syntrophus aciditrophicus (strain SB).